The chain runs to 422 residues: MALVEGCKHSLEISIPAAEVETETNRVVLDVQKRAKLPGFRPGKSPASIIRKQFAGDIRQQVLESLIPTHLQKQLEAENLNVVGTPDISDVHFHDNEPLRFKATFEVVPEIELGEYTNIEVPYQDPEVTDEDVTSRIDEIREQKAQYVNIDPRPLADGDFAVVSLESLEGVSGDPVKTDEMQLEIGAKETFEAFNENLRGLSPGDEKDFEVEYPADYGSEKLAGRKVKFHAVVKGLRKKELPELDDEFAQELGDYRTVDELKEAVRKAIFSQRQYEAQQEAKNKIVDKLVDAHEFPVPEVFVERQIRNRVEQSLRAMAEQGVDPSKLKLDWEKVKEAQREKATREVKASLLLGKVSDREAIRATRDEVDAEVEKAARQQRKPVAAVHMEFEKDGTLGRIASHIQTDKTLSFLFERARKTAES.

The PPIase FKBP-type domain maps to 158–242; it reads GDFAVVSLES…VKGLRKKELP (85 aa).

The protein belongs to the FKBP-type PPIase family. Tig subfamily.

The protein resides in the cytoplasm. The catalysed reaction is [protein]-peptidylproline (omega=180) = [protein]-peptidylproline (omega=0). Its function is as follows. Involved in protein export. Acts as a chaperone by maintaining the newly synthesized protein in an open conformation. Functions as a peptidyl-prolyl cis-trans isomerase. The sequence is that of Trigger factor from Solibacter usitatus (strain Ellin6076).